A 299-amino-acid polypeptide reads, in one-letter code: ATP phosphoribosyltransferase (299 aa).

This sequence belongs to the ATP phosphoribosyltransferase family. Long subfamily. The cofactor is Mg(2+).

The protein localises to the cytoplasm. The enzyme catalyses 1-(5-phospho-beta-D-ribosyl)-ATP + diphosphate = 5-phospho-alpha-D-ribose 1-diphosphate + ATP. The protein operates within amino-acid biosynthesis; L-histidine biosynthesis; L-histidine from 5-phospho-alpha-D-ribose 1-diphosphate: step 1/9. Its activity is regulated as follows. Feedback inhibited by histidine. In terms of biological role, catalyzes the condensation of ATP and 5-phosphoribose 1-diphosphate to form N'-(5'-phosphoribosyl)-ATP (PR-ATP). Has a crucial role in the pathway because the rate of histidine biosynthesis seems to be controlled primarily by regulation of HisG enzymatic activity. The protein is ATP phosphoribosyltransferase of Shewanella halifaxensis (strain HAW-EB4).